We begin with the raw amino-acid sequence, 327 residues long: GTP 3',8-cyclase (327 aa).

Residues alanine 8–alanine 232 enclose the Radical SAM core domain. Arginine 17 is a GTP binding site. [4Fe-4S] cluster-binding residues include cysteine 24 and cysteine 28. An S-adenosyl-L-methionine-binding site is contributed by tyrosine 30. Position 31 (cysteine 31) interacts with [4Fe-4S] cluster. Arginine 66 is a binding site for GTP. Position 70 (glycine 70) interacts with S-adenosyl-L-methionine. Threonine 97 is a binding site for GTP. Serine 121 contacts S-adenosyl-L-methionine. A GTP-binding site is contributed by lysine 158. Position 192 (methionine 192) interacts with S-adenosyl-L-methionine. [4Fe-4S] cluster contacts are provided by cysteine 255 and cysteine 258. Residue arginine 260 to arginine 262 coordinates GTP. Cysteine 272 provides a ligand contact to [4Fe-4S] cluster.

This sequence belongs to the radical SAM superfamily. MoaA family. In terms of assembly, monomer and homodimer. Requires [4Fe-4S] cluster as cofactor.

The catalysed reaction is GTP + AH2 + S-adenosyl-L-methionine = (8S)-3',8-cyclo-7,8-dihydroguanosine 5'-triphosphate + 5'-deoxyadenosine + L-methionine + A + H(+). The protein operates within cofactor biosynthesis; molybdopterin biosynthesis. Its function is as follows. Catalyzes the cyclization of GTP to (8S)-3',8-cyclo-7,8-dihydroguanosine 5'-triphosphate. The polypeptide is GTP 3',8-cyclase (Photorhabdus laumondii subsp. laumondii (strain DSM 15139 / CIP 105565 / TT01) (Photorhabdus luminescens subsp. laumondii)).